A 51-amino-acid polypeptide reads, in one-letter code: Sperm protamine P1 (51 aa).

Disulfide bonds link Cys-7–Cys-15 and Cys-40–Cys-48.

It belongs to the protamine P1 family. As to quaternary structure, cross-linked by interchain disulfide bonds around the DNA-helix. Testis.

The protein localises to the nucleus. The protein resides in the chromosome. In terms of biological role, protamines substitute for histones in the chromatin of sperm during the haploid phase of spermatogenesis. They compact sperm DNA into a highly condensed, stable and inactive complex. The protein is Sperm protamine P1 (PRM1) of Capra hircus (Goat).